Here is a 460-residue protein sequence, read N- to C-terminus: Protein unc-93 homolog A (460 aa).

5 helical membrane-spanning segments follow: residues I7 to L27, S41 to I61, W68 to S88, W89 to A109, and L139 to F159. N168 and N189 each carry an N-linked (GlcNAc...) asparagine glycan. Helical transmembrane passes span T203–L223, F292–G312, I321–W341, P345–W365, L390–V410, and L412–L432.

This sequence belongs to the unc-93 family.

It is found in the membrane. This is Protein unc-93 homolog A (unc93a) from Xenopus laevis (African clawed frog).